The chain runs to 366 residues: MTRETERFPAREFQRDLLDWFARERRDLPWRKDRDPYKVWVSEVMLQQTRVETVIPYFEQFIDRFPTLEALADADEDEVLKAWEGLGYYSRVRNLHAAVKEVKTRYGGKVPDDPDEFSRLKGVGPYTVGAVLSLAYGVPEPAVDGNVMRVLSRLFLVTDDIAKPSTRKRFEQIVREIMAYENPGAFNEALIELGALVCTPRRPSCLLCPVQAYCQAFAEGVAEELPVKMKKTAVKQVPLAVAVLADDEGRVLIRKRDSTGLLANLWEFPSCETDGADGKEKLEQMVGEQYGLQVELTEPIVSFEHAFSHLVWQLTVFPGRLVHGGPVEEPYRLAPEDELKAYAFPVSHQRVWREYKEWASGVRRPD.

30–31 (WR) is a binding site for DNA. The active-site Proton donor/acceptor is the E43. Residues 48 to 49 (QT), 86 to 88 (LGY), Y126, and E188 contribute to the DNA site. The region spanning 105 to 133 (RYGGKVPDDPDEFSRLKGVGPYTVGAVLS) is the HhH domain. [4Fe-4S] cluster is bound by residues C198, C205, C208, and C214. Position 308 (S308) interacts with DNA.

This sequence belongs to the Nth/MutY family. The cofactor is [4Fe-4S] cluster.

The enzyme catalyses Hydrolyzes free adenine bases from 7,8-dihydro-8-oxoguanine:adenine mismatched double-stranded DNA, leaving an apurinic site.. Its function is as follows. Base excision repair (BER) glycosylase that initiates repair of A:oxoG to C:G by removing the inappropriately paired adenine base from the DNA backbone, generating an abasic site product. 8-oxoguanine (oxoG) is a genotoxic DNA lesion resulting from oxidation of guanine; this residue is misread by replicative DNA polymerases, that insert adenine instead of cytosine opposite the oxidized damaged base. Shows a powerful dicrimination of A versus C, since it does not cleave cytosine in oxoG:C pairs. May also be able to remove adenine from A:G mispairs, although this activity may not be physiologically relevant. The protein is Adenine DNA glycosylase of Geobacillus stearothermophilus (Bacillus stearothermophilus).